The primary structure comprises 213 residues: MTENLHSRKMVQPKKFRGVRQRHWGSWVSEIRHPLLKRRVWLGTFETAEEAARAYDEAAVLMSGRNAKTNFPIQRSSTGEPTPAAGRDARSNFSSGSSTTNLSQILSAKLRKCCKAPSPSLTCLRLDPEKSHIGVWQKRAGARADSNWVMTVELNKDAASTDAASQSTSATTAPPATPMDEEERIALQMIEELLSSSSPASPSNGDDQGRFII.

Positions lysine 15 to proline 72 form a DNA-binding region, AP2/ERF. Polar residues predominate over residues asparagine 70–glutamate 80. Disordered regions lie at residues asparagine 70 to threonine 99 and alanine 159 to isoleucine 213. Residues alanine 159 to proline 174 are compositionally biased toward low complexity.

This sequence belongs to the AP2/ERF transcription factor family. ERF subfamily. Mostly expressed in roots, stems and anthers, and, to a lower extent, in leaves, seeds and silks.

The protein localises to the nucleus. In terms of biological role, promotes cuticle formation by inducing the expression of enzymes involved in wax biosynthesis, particularly promoting very-long-chain waxes formation. Confers drought resistance. Acts as a transcriptional activator binding directly to promoter regions of CER2, CER3.2 and KCS1, wax biosynthesis-related genes. Binds to the GCC-box pathogenesis-related promoter element. May be involved in the regulation of gene expression by stress factors and by components of stress signal transduction pathways. This is Ethylene-responsive transcription factor WIN1 from Zea mays (Maize).